A 1156-amino-acid polypeptide reads, in one-letter code: Nuclear pore complex protein Nup133 (1156 aa).

Residue Met-1 is modified to N-acetylmethionine. The segment at 1 to 39 (MFPAAPSPRTPGTGSRRGPLAGLGPGSTPRTASRKGLPL) is disordered. 2 positions are modified to phosphoserine: Ser-7 and Ser-15. At Arg-17 the chain carries Omega-N-methylarginine. Ser-27 bears the Phosphoserine mark. Residue Thr-28 is modified to Phosphothreonine. Omega-N-methylarginine is present on Arg-30. Phosphoserine is present on residues Ser-41, Ser-45, Ser-50, Ser-72, Ser-131, Ser-480, Ser-489, Ser-493, Ser-501, and Ser-755. N6-acetyllysine is present on Lys-787. Ser-1133 carries the post-translational modification Phosphoserine.

The protein belongs to the nucleoporin Nup133 family. In terms of assembly, forms part of the Nup160 subcomplex in the nuclear pore which is composed of NUP160, NUP133, NUP107 and Nup96. This complex plays a role in RNA export and in tethering Nup98 and NUP153 to the nucleus. In terms of tissue distribution, widely expressed in fetal and adult tissues. Expressed in the brain and kidney.

It localises to the nucleus. The protein resides in the nuclear pore complex. The protein localises to the chromosome. It is found in the centromere. Its subcellular location is the kinetochore. Its function is as follows. Involved in poly(A)+ RNA transport. Involved in nephrogenesis. The protein is Nuclear pore complex protein Nup133 (NUP133) of Homo sapiens (Human).